The chain runs to 481 residues: 2-succinylbenzoate--CoA ligase (481 aa).

The protein belongs to the ATP-dependent AMP-binding enzyme family. MenE subfamily.

The enzyme catalyses 2-succinylbenzoate + ATP + CoA = 2-succinylbenzoyl-CoA + AMP + diphosphate. It functions in the pathway quinol/quinone metabolism; 1,4-dihydroxy-2-naphthoate biosynthesis; 1,4-dihydroxy-2-naphthoate from chorismate: step 5/7. Its pathway is quinol/quinone metabolism; menaquinone biosynthesis. Converts 2-succinylbenzoate (OSB) to 2-succinylbenzoyl-CoA (OSB-CoA). This chain is 2-succinylbenzoate--CoA ligase, found in Bacillus mycoides (strain KBAB4) (Bacillus weihenstephanensis).